The chain runs to 636 residues: Putative lipase ATG15 (636 aa).

Residues 1-19 (MYKYGTVVDPAMTTNRRSR) are Cytoplasmic-facing. Residues 20 to 42 (LSGFRCASTARVTATLLLSFLAF) traverse the membrane as a helical; Signal-anchor for type II membrane protein segment. At 43–636 (SPSSASSDFG…DDLEFATDEM (594 aa)) the chain is on the lumenal side. Asparagine 211, asparagine 233, asparagine 291, asparagine 315, and asparagine 477 each carry an N-linked (GlcNAc...) asparagine glycan. Positions 478–500 (GTETTTTSSPSTTSTTRTRTRTS) are disordered. The segment covering 479-500 (TETTTTSSPSTTSTTRTRTRTS) has biased composition (low complexity).

Belongs to the AB hydrolase superfamily. Lipase family. In terms of assembly, binds to both phosphatidylinositol (PI) and phosphatidylinositol 3,5-bisphosphate (PIP2).

The protein resides in the endosome. Its subcellular location is the multivesicular body membrane. The protein localises to the prevacuolar compartment membrane. The enzyme catalyses a triacylglycerol + H2O = a diacylglycerol + a fatty acid + H(+). Its function is as follows. Lipase which is essential for lysis of subvacuolar cytoplasm to vacuole targeted bodies and intravacuolar autophagic bodies. Involved in the lysis of intravacuolar multivesicular body (MVB) vesicles. The intravacuolar membrane disintegration by ATG15 is critical to life span extension. Autophagy is required for proper vegetative growth, asexual/sexual reproduction, and full virulence. Autophagy is particularly involved in the biosynthesis of deoxynivalenol (DON), an important virulence determinant. The polypeptide is Putative lipase ATG15 (Gibberella zeae (strain ATCC MYA-4620 / CBS 123657 / FGSC 9075 / NRRL 31084 / PH-1) (Wheat head blight fungus)).